We begin with the raw amino-acid sequence, 357 residues long: 3-isopropylmalate dehydrogenase (357 aa).

76–89 (GPQWDTIDPSLRPE) is a binding site for NAD(+). 4 residues coordinate substrate: arginine 96, arginine 106, arginine 134, and aspartate 224. Positions 224, 248, and 252 each coordinate Mg(2+). 282-294 (GSAPDIAGKGIAN) contacts NAD(+).

Belongs to the isocitrate and isopropylmalate dehydrogenases family. LeuB type 1 subfamily. In terms of assembly, homodimer. The cofactor is Mg(2+). Mn(2+) serves as cofactor.

Its subcellular location is the cytoplasm. It carries out the reaction (2R,3S)-3-isopropylmalate + NAD(+) = 4-methyl-2-oxopentanoate + CO2 + NADH. Its pathway is amino-acid biosynthesis; L-leucine biosynthesis; L-leucine from 3-methyl-2-oxobutanoate: step 3/4. Catalyzes the oxidation of 3-carboxy-2-hydroxy-4-methylpentanoate (3-isopropylmalate) to 3-carboxy-4-methyl-2-oxopentanoate. The product decarboxylates to 4-methyl-2 oxopentanoate. In Xanthomonas oryzae pv. oryzae (strain MAFF 311018), this protein is 3-isopropylmalate dehydrogenase.